Here is an 838-residue protein sequence, read N- to C-terminus: Outer membrane usher protein YraJ (838 aa).

The N-terminal stretch at 1–40 (MPQRHHQGHKRTPKQLALIIKRCLPMVLTGSGMLCTTANA) is a signal peptide. Cys-815 and Cys-837 are joined by a disulfide.

The protein belongs to the fimbrial export usher family.

The protein resides in the cell outer membrane. Part of the yraHIJK fimbrial operon. Could contribute to adhesion to various surfaces in specific environmental niches. Increases adhesion to eukaryotic T24 bladder epithelial cells in the absence of fim operon. Probably involved in the export and assembly of fimbrial subunits across the outer membrane. This is Outer membrane usher protein YraJ (yraJ) from Escherichia coli (strain K12).